The sequence spans 266 residues: 4-hydroxy-tetrahydrodipicolinate reductase (266 aa).

11–16 (GALGKM) serves as a coordination point for NAD(+). NADP(+) is bound at residue K39. 100–102 (GTT) is an NAD(+) binding site. The active-site Proton donor/acceptor is H156. H157 lines the (S)-2,3,4,5-tetrahydrodipicolinate pocket. K160 functions as the Proton donor in the catalytic mechanism. A (S)-2,3,4,5-tetrahydrodipicolinate-binding site is contributed by 166–167 (GT).

Belongs to the DapB family.

It localises to the cytoplasm. The enzyme catalyses (S)-2,3,4,5-tetrahydrodipicolinate + NAD(+) + H2O = (2S,4S)-4-hydroxy-2,3,4,5-tetrahydrodipicolinate + NADH + H(+). It carries out the reaction (S)-2,3,4,5-tetrahydrodipicolinate + NADP(+) + H2O = (2S,4S)-4-hydroxy-2,3,4,5-tetrahydrodipicolinate + NADPH + H(+). It functions in the pathway amino-acid biosynthesis; L-lysine biosynthesis via DAP pathway; (S)-tetrahydrodipicolinate from L-aspartate: step 4/4. Functionally, catalyzes the conversion of 4-hydroxy-tetrahydrodipicolinate (HTPA) to tetrahydrodipicolinate. In Syntrophomonas wolfei subsp. wolfei (strain DSM 2245B / Goettingen), this protein is 4-hydroxy-tetrahydrodipicolinate reductase.